Reading from the N-terminus, the 450-residue chain is Divalent metal cation transporter MntH (450 aa).

Helical transmembrane passes span 34 to 54 (LSFLGPGLLVAVGYMDPGNWI), 61 to 81 (AQYGYTLLFVILISSLSAMLL), 108 to 128 (IAIIFWIIAELAIIATDIAEV), 141 to 161 (IPLIVGALITVLDVFLLLFIM), 170 to 190 (AIVGTLIFTVLFIFIFEVYIS), 212 to 232 (GILYIALGIIGATIMPHNLYL), 263 to 283 (IQLSIAFVVNCLLLVLGASLF), 305 to 325 (PVLGATMGAIMSTLFAVALLA), 361 to 381 (SLAVIPVIVCLIIFKGNAAKI), 383 to 403 (QLLVFSQVFLSIALPFCLIPL), and 422 to 442 (VNIISWTLIIILSILNVYLIV).

It belongs to the NRAMP family.

It localises to the cell membrane. Functionally, h(+)-stimulated, divalent metal cation uptake system. The polypeptide is Divalent metal cation transporter MntH (Staphylococcus aureus (strain JH1)).